The following is a 236-amino-acid chain: Transmembrane protein 70 homolog, mitochondrial (236 aa).

A mitochondrion-targeting transit peptide spans 1-64 (MLGLRAMLPK…WLSVKSTKTE (64 aa)). Helical transmembrane passes span 83–103 (MVKF…PILL) and 116–136 (VFLC…LHFI).

This sequence belongs to the TMEM70 family. In terms of assembly, associates with mitochondrial complex I assembly intermediates during its biogenesis.

It is found in the mitochondrion membrane. Functionally, scaffold protein that participates in the c-ring assembly of mitochondrial ATP synthase (F(1)F(0) ATP synthase or complex V). Also binds the mitochondrial proton-transporting ATP synthase complex I and may play a role in the stability of its membrane-bound subassemblies. In Drosophila melanogaster (Fruit fly), this protein is Transmembrane protein 70 homolog, mitochondrial.